The chain runs to 303 residues: N-acetyl-D-glucosamine kinase (303 aa).

ATP-binding positions include 4–11 (GFDIGGTK) and 133–140 (GVGGGLIF). Zn(2+) is bound by residues H157, C177, C179, and C184.

Belongs to the ROK (NagC/XylR) family. NagK subfamily.

It catalyses the reaction N-acetyl-D-glucosamine + ATP = N-acetyl-D-glucosamine 6-phosphate + ADP + H(+). It participates in cell wall biogenesis; peptidoglycan recycling. Its function is as follows. Catalyzes the phosphorylation of N-acetyl-D-glucosamine (GlcNAc) derived from cell-wall degradation, yielding GlcNAc-6-P. The chain is N-acetyl-D-glucosamine kinase from Escherichia fergusonii (strain ATCC 35469 / DSM 13698 / CCUG 18766 / IAM 14443 / JCM 21226 / LMG 7866 / NBRC 102419 / NCTC 12128 / CDC 0568-73).